Consider the following 235-residue polypeptide: 2-C-methyl-D-erythritol 4-phosphate cytidylyltransferase (235 aa).

The protein belongs to the IspD/TarI cytidylyltransferase family. IspD subfamily.

It carries out the reaction 2-C-methyl-D-erythritol 4-phosphate + CTP + H(+) = 4-CDP-2-C-methyl-D-erythritol + diphosphate. It participates in isoprenoid biosynthesis; isopentenyl diphosphate biosynthesis via DXP pathway; isopentenyl diphosphate from 1-deoxy-D-xylulose 5-phosphate: step 2/6. Its function is as follows. Catalyzes the formation of 4-diphosphocytidyl-2-C-methyl-D-erythritol from CTP and 2-C-methyl-D-erythritol 4-phosphate (MEP). The sequence is that of 2-C-methyl-D-erythritol 4-phosphate cytidylyltransferase from Pseudomonas putida (strain W619).